Here is a 304-residue protein sequence, read N- to C-terminus: Polyisoprenyl-teichoic acid--peptidoglycan teichoic acid transferase TagU (304 aa).

Topologically, residues 1–3 (MKK) are cytoplasmic. The chain crosses the membrane as a helical; Signal-anchor for type II membrane protein span at residues 4 to 24 (ALIAIGLILGTITVAIIGYGI). The Extracellular segment spans residues 25–304 (YLYSSIQNTA…GELKSHLELS (280 aa)).

Belongs to the LytR/CpsA/Psr (LCP) family.

Its subcellular location is the cell membrane. It participates in cell wall biogenesis. Its function is as follows. May catalyze the final step in cell wall teichoic acid biosynthesis, the transfer of the anionic cell wall polymers (APs) from their lipid-linked precursor to the cell wall peptidoglycan (PG). The chain is Polyisoprenyl-teichoic acid--peptidoglycan teichoic acid transferase TagU from Halalkalibacterium halodurans (strain ATCC BAA-125 / DSM 18197 / FERM 7344 / JCM 9153 / C-125) (Bacillus halodurans).